Here is a 192-residue protein sequence, read N- to C-terminus: Elongation factor P (192 aa).

It belongs to the elongation factor P family.

The protein localises to the cytoplasm. Its pathway is protein biosynthesis; polypeptide chain elongation. Functionally, involved in peptide bond synthesis. Stimulates efficient translation and peptide-bond synthesis on native or reconstituted 70S ribosomes in vitro. Probably functions indirectly by altering the affinity of the ribosome for aminoacyl-tRNA, thus increasing their reactivity as acceptors for peptidyl transferase. This chain is Elongation factor P (efp), found in Aquifex aeolicus (strain VF5).